The primary structure comprises 491 residues: Ketol-acid reductoisomerase (NADP(+)) (491 aa).

The KARI N-terminal Rossmann domain occupies 15 to 208 (AQLGKCRFMA…GGHRAGVLES (194 aa)). Residues 45–48 (CGAQ), R68, R76, S78, and 108–110 (DKQ) contribute to the NADP(+) site. Residue H132 is part of the active site. Position 158 (G158) interacts with NADP(+). KARI C-terminal knotted domains follow at residues 209–344 (SFVA…TAPQ) and 345–484 (YEGK…MTDM). D217, E221, E389, and E393 together coordinate Mg(2+). Substrate is bound at residue S414.

This sequence belongs to the ketol-acid reductoisomerase family. Mg(2+) serves as cofactor.

The catalysed reaction is (2R)-2,3-dihydroxy-3-methylbutanoate + NADP(+) = (2S)-2-acetolactate + NADPH + H(+). The enzyme catalyses (2R,3R)-2,3-dihydroxy-3-methylpentanoate + NADP(+) = (S)-2-ethyl-2-hydroxy-3-oxobutanoate + NADPH + H(+). The protein operates within amino-acid biosynthesis; L-isoleucine biosynthesis; L-isoleucine from 2-oxobutanoate: step 2/4. Its pathway is amino-acid biosynthesis; L-valine biosynthesis; L-valine from pyruvate: step 2/4. Its function is as follows. Involved in the biosynthesis of branched-chain amino acids (BCAA). Catalyzes an alkyl-migration followed by a ketol-acid reduction of (S)-2-acetolactate (S2AL) to yield (R)-2,3-dihydroxy-isovalerate. In the isomerase reaction, S2AL is rearranged via a Mg-dependent methyl migration to produce 3-hydroxy-3-methyl-2-ketobutyrate (HMKB). In the reductase reaction, this 2-ketoacid undergoes a metal-dependent reduction by NADPH to yield (R)-2,3-dihydroxy-isovalerate. The sequence is that of Ketol-acid reductoisomerase (NADP(+)) from Klebsiella pneumoniae subsp. pneumoniae (strain ATCC 700721 / MGH 78578).